The following is a 353-amino-acid chain: Protein-glutamate methylesterase/protein-glutamine glutaminase 4 (353 aa).

A Response regulatory domain is found at 7–124 (RILVAEDSPT…SPDFDADSRR (118 aa)). Residue Asp-58 is modified to 4-aspartylphosphate. Positions 158–350 (PVSPTRPGVV…SRLTSAFRGS (193 aa)) constitute a CheB-type methylesterase domain. Active-site residues include Ser-172, His-199, and Asp-292.

This sequence belongs to the CheB family. Post-translationally, phosphorylated by CheA. Phosphorylation of the N-terminal regulatory domain activates the methylesterase activity.

The protein localises to the cytoplasm. The enzyme catalyses [protein]-L-glutamate 5-O-methyl ester + H2O = L-glutamyl-[protein] + methanol + H(+). It carries out the reaction L-glutaminyl-[protein] + H2O = L-glutamyl-[protein] + NH4(+). Involved in chemotaxis. Part of a chemotaxis signal transduction system that modulates chemotaxis in response to various stimuli. Catalyzes the demethylation of specific methylglutamate residues introduced into the chemoreceptors (methyl-accepting chemotaxis proteins or MCP) by CheR. Also mediates the irreversible deamidation of specific glutamine residues to glutamic acid. This is Protein-glutamate methylesterase/protein-glutamine glutaminase 4 from Myxococcus xanthus (strain DK1622).